The sequence spans 297 residues: GATA transcription factor 24 (297 aa).

The region spanning 73 to 108 (GIENGDQLTLSFQGQVYVFDRVSPEKVQAVLLLLGG) is the Tify domain. The region spanning 143 to 185 (RLASLLRFREKRKGRNFDKTIRYTVRKEVALRMQRKKGQFTSA) is the CCT domain. A disordered region spans residues 178 to 203 (KKGQFTSAKSSNDDSGSTGSDWGSNQ). Low complexity predominate over residues 190 to 201 (DDSGSTGSDWGS). The GATA-type zinc finger occupies 213 to 269 (QKPEVLCRHCGTSEKSTPMMRRGPDGPRTLCNACGLMWANKGTLRDLSKVPPPQTPQ).

Belongs to the type IV zinc-finger family. Class C subfamily. Predominantly expressed in shoot apices, inflorescences and roots.

It is found in the nucleus. Functionally, transcriptional activator that specifically binds 5'-GATA-3' or 5'-GAT-3' motifs within gene promoters. This Arabidopsis thaliana (Mouse-ear cress) protein is GATA transcription factor 24 (GATA24).